The primary structure comprises 424 residues: Delta(14)-sterol reductase erg24 (424 aa).

2 helical membrane-spanning segments follow: residues Ile19–Cys39 and Leu112–Ile132. NADP(+) is bound by residues Lys317, Arg321, Leu344, Trp349, and Asn356–Tyr357. The helical transmembrane segment at Pro370 to Val390 threads the bilayer. NADP(+)-binding positions include Asp396, Cys400 to Tyr404, and Tyr411.

This sequence belongs to the ERG4/ERG24 family.

The protein resides in the endoplasmic reticulum membrane. The enzyme catalyses 4,4-dimethyl-5alpha-cholesta-8,24-dien-3beta-ol + NADP(+) = 4,4-dimethyl-5alpha-cholesta-8,14,24-trien-3beta-ol + NADPH + H(+). Its pathway is steroid biosynthesis; zymosterol biosynthesis; zymosterol from lanosterol: step 2/6. It functions in the pathway steroid metabolism; ergosterol biosynthesis. In terms of biological role, delta(14)-sterol reductase; part of the third module of ergosterol biosynthesis pathway that includes by the late steps of the pathway. Erg24 reduces the C14=C15 double bond of 4,4-dimethyl-cholesta-8,14,24-trienol to produce 4,4-dimethyl-cholesta-8,24-dienol. The third module or late pathway involves the ergosterol synthesis itself through consecutive reactions that mainly occur in the endoplasmic reticulum (ER) membrane. Firstly, the squalene synthase erg9 catalyzes the condensation of 2 farnesyl pyrophosphate moieties to form squalene, which is the precursor of all steroids. Secondly, squalene is converted into lanosterol by the consecutive action of the squalene epoxidase erg1 and the lanosterol synthase erg7. The lanosterol 14-alpha-demethylase erg11/cyp1 catalyzes C14-demethylation of lanosterol to produce 4,4'-dimethyl cholesta-8,14,24-triene-3-beta-ol. In the next steps, a complex process involving various demethylation, reduction and desaturation reactions catalyzed by the C-14 reductase erg24 and the C-4 demethylation complex erg25-erg26-erg27 leads to the production of zymosterol. Erg28 likely functions in the C-4 demethylation complex reaction by tethering erg26 and Erg27 to the endoplasmic reticulum or to facilitate interaction between these proteins. Then, the sterol 24-C-methyltransferase erg6 catalyzes the methyl transfer from S-adenosyl-methionine to the C-24 of zymosterol to form fecosterol. The C-8 sterol isomerase erg2 catalyzes the reaction which results in unsaturation at C-7 in the B ring of sterols and thus converts fecosterol to episterol. The sterol-C5-desaturases erg31 and erg32 then catalyze the introduction of a C-5 double bond in the B ring to produce 5-dehydroepisterol. The C-22 sterol desaturase erg5 further converts 5-dehydroepisterol into ergosta-5,7,22,24(28)-tetraen-3beta-ol by forming the C-22(23) double bond in the sterol side chain. Finally, ergosta-5,7,22,24(28)-tetraen-3beta-ol is substrate of the C-24(28) sterol reductase erg4 to produce ergosterol. In the genus Schizosaccharomyces, a second route exists between lanosterol and fecosterol, via the methylation of lanosterol to eburicol by erg6, followed by C14-demethylation by erg11/cyp1 and C4-demethylation by the demethylation complex erg25-erg26-erg27. The protein is Delta(14)-sterol reductase erg24 of Schizosaccharomyces pombe (strain 972 / ATCC 24843) (Fission yeast).